The chain runs to 981 residues: MDDQKGPLPPYTPTATAPPPASMRQRRPPGRRRALRRSRTVRVLALACLAFVVLAQWKQLWRGERKAPPYLSVDKLNDNLETCRKLRVRPQDPAGPGRSKNDRYLDGGGKPTLIRNALIWTGEPVPGTSDEDARAGVGWAWWLGDVLVERGLITKVDNKMPASEVPEDAIIYDAEGRRLTSGIVDMHSHAGVSPLPGLNGNDDTNEASDNITPWARSIDGLFPLDPQIQVIKSGGVTSSLILPGSANNIGGEAFLIKHAVGRHDGRPELSAASMLADPDRTWRYMKMACGENAKRVHGSRTTRPVTRMGESYDFRRAFERASQLVRRQDDWCDRAGEVGVGSMDEYLPEDLEWEALGAALRGQVHVNAHCYTVNDLEAMVDHSNEFEFPIRAFHHAHQAHLVPEILNRTWGGRPPALAIFADNMYYKAEAYIGTPSAGKMLYDQGLTPIYVSDNPVLNAQHVVLEAAKGFHYGLPYHAALASVTTAPADTLGMGQRLGKIKAGFDADIVVWDSDPLGVGAAPVQVWIDGTAQFDDPVVLSKPHARAEKDTVVVPDAPPPVVVEEPVEVADVLFRGVTRVLLDEHDVSAEDGASLNVAIRGGRISCIGECADEFRVAIDAGVGVVTLGNGHLHKTFVGVGGTLGLNEIDGESKTGNGKNPKTFTRAVDGLLLGGKKLRAAHHAGVTRAISAPRFKGGGNTHHGTSVGIVTSARTSLDAGAIFGNGDVAVHYTLDLSVRGGDDESYSAAFGSLREKLIRAGVHGGKEKEVGAEEVGAEEEEEEEEKAFLRRVLASEMVLALTINSADGIATALRIKDEVDKKQQKQQQQQQQQQQQQHGTSSGIRMAIIGGAEAYLVAEHLAAANVGVILSPLQSYGETWDARRALPGAPLTNGTNIDRLLDAGVKVGIGLKEDWEVRDLALAAGTAYENGGGRLTGRQALDLVGRNVLEILGVEEEEETPGATMGESGHFVVLLIINMFCGL.

A disordered region spans residues 1–36; sequence MDDQKGPLPPYTPTATAPPPASMRQRRPPGRRRALR. Positions 7-21 are enriched in pro residues; that stretch reads PLPPYTPTATAPPPA. Residues 24–36 are compositionally biased toward basic residues; the sequence is RQRRPPGRRRALR. A helical membrane pass occupies residues 40-57; sequence TVRVLALACLAFVVLAQW. Residues 86–107 are disordered; the sequence is LRVRPQDPAGPGRSKNDRYLDG. Fe(2+)-binding residues include histidine 187 and histidine 189. The Zn(2+) site is built by histidine 187 and histidine 189. The N-linked (GlcNAc...) asparagine glycan is linked to asparagine 407. The tract at residues 819–838 is disordered; the sequence is KKQQKQQQQQQQQQQQQHGT. A compositionally biased stretch (low complexity) spans 823–835; it reads KQQQQQQQQQQQQ. N-linked (GlcNAc...) asparagine glycosylation is present at asparagine 891.

It belongs to the metallo-dependent hydrolases superfamily. It depends on Fe(2+) as a cofactor. Mn(2+) is required as a cofactor. Zn(2+) serves as cofactor.

The protein resides in the membrane. Its function is as follows. Amidohydrolase; part of the gene cluster that mediates the biosynthesis of the tetramic acids Sch210971 and Sch210972, potential anti-HIV fungal natural product that contain a decalin core. The PKS module of tasS together with the enoylreductase tasC catalyze the formation of the polyketide unit which is then conjugated to 4-hydroxyl-4-methyl glutamate (HMG) by the condensation domain of the tasS NRPS module. One unique structural feature of Sch210971 and Sch210972 is the tetramic acid motif proposed to be derived from the non-proteinogenic amino acid HMG, by a Dieckmann-type condensation catalyzed by the reductase domain of tasS. The aldolase tasA catalyzes the aldol condensation of 2 molecules of pyruvic acid to yield the intermediate 4-hydroxyl-4-methyl-2-oxoglutarate (HMOG), which can then be stereoselectively transaminated, may be by tasG, to form HMG. The Diels-Alderase tas3 then uses the Dieckmann product of tasS as substrate and catalyzes the Diels-Alder cycloaddition to form the decalin ring of Sch210971 and Sch210972. In Hapsidospora irregularis, this protein is Amidohydrolase tasK.